The following is a 347-amino-acid chain: A-type ATP synthase subunit C (347 aa).

It belongs to the V-ATPase V0D/AC39 subunit family. As to quaternary structure, has multiple subunits with at least A(3), B(3), C, D, E, F, H, I and proteolipid K(x).

It is found in the cell membrane. In terms of biological role, component of the A-type ATP synthase that produces ATP from ADP in the presence of a proton gradient across the membrane. The sequence is that of A-type ATP synthase subunit C from Haloquadratum walsbyi (strain DSM 16790 / HBSQ001).